A 183-amino-acid chain; its full sequence is ATP synthase subunit b, chloroplastic (183 aa).

A helical transmembrane segment spans residues 27–49 (LATNLINLTVVVGVLIFFGKGVL).

The protein belongs to the ATPase B chain family. F-type ATPases have 2 components, F(1) - the catalytic core - and F(0) - the membrane proton channel. F(1) has five subunits: alpha(3), beta(3), gamma(1), delta(1), epsilon(1). F(0) has four main subunits: a(1), b(1), b'(1) and c(10-14). The alpha and beta chains form an alternating ring which encloses part of the gamma chain. F(1) is attached to F(0) by a central stalk formed by the gamma and epsilon chains, while a peripheral stalk is formed by the delta, b and b' chains.

It is found in the plastid. Its subcellular location is the chloroplast thylakoid membrane. In terms of biological role, f(1)F(0) ATP synthase produces ATP from ADP in the presence of a proton or sodium gradient. F-type ATPases consist of two structural domains, F(1) containing the extramembraneous catalytic core and F(0) containing the membrane proton channel, linked together by a central stalk and a peripheral stalk. During catalysis, ATP synthesis in the catalytic domain of F(1) is coupled via a rotary mechanism of the central stalk subunits to proton translocation. Its function is as follows. Component of the F(0) channel, it forms part of the peripheral stalk, linking F(1) to F(0). The protein is ATP synthase subunit b, chloroplastic of Hordeum vulgare (Barley).